A 443-amino-acid polypeptide reads, in one-letter code: ATP-dependent protease ATPase subunit HslU (443 aa).

Residues Ile-18, 60–65 (GVGKTE), Asp-256, Glu-321, and Arg-393 each bind ATP.

Belongs to the ClpX chaperone family. HslU subfamily. A double ring-shaped homohexamer of HslV is capped on each side by a ring-shaped HslU homohexamer. The assembly of the HslU/HslV complex is dependent on binding of ATP.

Its subcellular location is the cytoplasm. In terms of biological role, ATPase subunit of a proteasome-like degradation complex; this subunit has chaperone activity. The binding of ATP and its subsequent hydrolysis by HslU are essential for unfolding of protein substrates subsequently hydrolyzed by HslV. HslU recognizes the N-terminal part of its protein substrates and unfolds these before they are guided to HslV for hydrolysis. This is ATP-dependent protease ATPase subunit HslU from Yersinia pestis bv. Antiqua (strain Antiqua).